We begin with the raw amino-acid sequence, 306 residues long: Aspartate carbamoyltransferase catalytic subunit (306 aa).

Carbamoyl phosphate contacts are provided by Arg-55 and Thr-56. Lys-84 provides a ligand contact to L-aspartate. Carbamoyl phosphate-binding residues include Arg-105, His-133, and Gln-136. Residues Arg-166 and Arg-227 each coordinate L-aspartate. Leu-265 and Pro-266 together coordinate carbamoyl phosphate.

Belongs to the aspartate/ornithine carbamoyltransferase superfamily. ATCase family. As to quaternary structure, heterododecamer (2C3:3R2) of six catalytic PyrB chains organized as two trimers (C3), and six regulatory PyrI chains organized as three dimers (R2).

It catalyses the reaction carbamoyl phosphate + L-aspartate = N-carbamoyl-L-aspartate + phosphate + H(+). Its pathway is pyrimidine metabolism; UMP biosynthesis via de novo pathway; (S)-dihydroorotate from bicarbonate: step 2/3. Its function is as follows. Catalyzes the condensation of carbamoyl phosphate and aspartate to form carbamoyl aspartate and inorganic phosphate, the committed step in the de novo pyrimidine nucleotide biosynthesis pathway. This chain is Aspartate carbamoyltransferase catalytic subunit, found in Neisseria meningitidis serogroup C / serotype 2a (strain ATCC 700532 / DSM 15464 / FAM18).